The sequence spans 316 residues: tRNA-dihydrouridine(16) synthase (316 aa).

Residues 7 to 9 and Q68 each bind FMN; that span reads PME. C98 (proton donor) is an active-site residue. Residues K139, 200-202, and 224-225 contribute to the FMN site; these read NGE and GR.

It belongs to the Dus family. DusC subfamily. It depends on FMN as a cofactor.

It carries out the reaction 5,6-dihydrouridine(16) in tRNA + NADP(+) = uridine(16) in tRNA + NADPH + H(+). The enzyme catalyses 5,6-dihydrouridine(16) in tRNA + NAD(+) = uridine(16) in tRNA + NADH + H(+). Catalyzes the synthesis of 5,6-dihydrouridine (D), a modified base found in the D-loop of most tRNAs, via the reduction of the C5-C6 double bond in target uridines. Specifically modifies U16 in tRNAs. The protein is tRNA-dihydrouridine(16) synthase of Escherichia coli O157:H7.